A 193-amino-acid chain; its full sequence is Interferon type A1/A2 (193 aa).

An N-terminal signal peptide occupies residues 1–31; it reads MAVPASPQHPRGYGILLLTLLLKALATTASA. Cystine bridges form between Cys32/Cys129, Cys61/Cys155, and Cys68/Cys168. Residues Asn65, Asn71, Asn108, and Asn186 are each glycosylated (N-linked (GlcNAc...) asparagine).

This sequence belongs to the alpha/beta interferon family.

Its subcellular location is the secreted. Has antiviral activities. The protein is Interferon type A1/A2 (IFNA1) of Gallus gallus (Chicken).